The primary structure comprises 224 residues: Putative carbamate hydrolase RutD (224 aa).

The AB hydrolase-1 domain maps to 14-115 (PVVVLISGLG…TVLVSVNGWL (102 aa)).

Belongs to the AB hydrolase superfamily. Hydrolase RutD family.

It carries out the reaction carbamate + 2 H(+) = NH4(+) + CO2. Functionally, involved in pyrimidine catabolism. May facilitate the hydrolysis of carbamate, a reaction that can also occur spontaneously. This is Putative carbamate hydrolase RutD from Shigella dysenteriae serotype 1 (strain Sd197).